The primary structure comprises 489 residues: Dipeptide and tripeptide permease B (489 aa).

Residues 1–27 (MNKPASIGLLQQPKPFFMIFFVELWER) lie on the Cytoplasmic side of the membrane. The helical transmembrane segment at 28–48 (FGYYGVQGILAVYFVHKLGFS) threads the bilayer. Over 49–52 (QEQA) the chain is Periplasmic. Residues 53-73 (FTTFGAFAALVYGLIAIGGYV) form a helical membrane-spanning segment. Residues 74–82 (GDHLLGTKR) are Cytoplasmic-facing. Residues 83 to 103 (TIVLGAIVLTVGYFMTGLSIL) form a helical membrane-spanning segment. Residues 104–106 (KPE) are Periplasmic-facing. The chain crosses the membrane as a helical span at residues 107-127 (LIFYALGTIAVGNGLFKANPA). At 128-146 (SLLSKCYPPKDPRLDGAFT) the chain is on the cytoplasmic side. Residues 147–167 (LFYMSINIGSLFSLAIAPVIA) form a helical membrane-spanning segment. Over 168–171 (EKFG) the chain is Periplasmic. Residues 172–192 (YAVTYNICGIGLIIALLVYVL) form a helical membrane-spanning segment. Topologically, residues 193–212 (YRNTVRNIGSEPDHRPINYK) are cytoplasmic. 2 consecutive transmembrane segments (helical) span residues 213–233 (NLLL…WLMH) and 234–254 (NVKI…FIFF). The Cytoplasmic segment spans residues 255-267 (REAFKQDKVGRNK). The chain crosses the membrane as a helical span at residues 268–288 (MFVAFILMLQAIVFFILYAQM). Over 289 to 311 (PTSLNFFAINNVHHQLLGFNINP) the chain is Periplasmic. The helical transmembrane segment at 312–332 (VSFQALNPFWIVVASPILAAL) threads the bilayer. The Cytoplasmic portion of the chain corresponds to 333–350 (YTHWGSRSKDLTMPAKFT). Residues 351–371 (VGMFLCSLGFLTAAAAGLWFA) form a helical membrane-spanning segment. At 372 to 375 (DEQG) the chain is on the periplasmic side. A helical transmembrane segment spans residues 376–396 (LTSPWFIVLVYLFQSLGELMI). The Cytoplasmic segment spans residues 397-419 (SALGLAMVAALVPQYLMGFILGM). A helical membrane pass occupies residues 420–440 (WYLTQATSFLLGGYVAAFTAI). At 441–456 (PEGITDPLETLPVYTN) the chain is on the periplasmic side. The chain crosses the membrane as a helical span at residues 457–477 (VFGKIGITTFIVAIIMAITVP). Topologically, residues 478 to 489 (LLNRMMNGKQKA) are cytoplasmic.

It belongs to the major facilitator superfamily. Proton-dependent oligopeptide transporter (POT/PTR) (TC 2.A.17) family. DtpB subfamily.

The protein resides in the cell inner membrane. Proton-dependent permease that transports di- and tripeptides. The sequence is that of Dipeptide and tripeptide permease B from Photorhabdus asymbiotica subsp. asymbiotica (strain ATCC 43949 / 3105-77) (Xenorhabdus luminescens (strain 2)).